A 547-amino-acid chain; its full sequence is MYRLMSAVTARAAAPGGLASSCGRRGVHQRAGLPPLGHGWVGGLGLGLGLALGVKLAGGLRGAAPAQSPAAPDPEASPLAEPPQEQSLAPWSPQTPAPPCSRCFARAIESSRDLLHRIKDEVGAPGIVVGVSVDGKEVWSEGLGYADVENRVPCKPETVMRIASISKSLTMVALAKLWEAGKLDLDIPVQHYVPEFPEKEYEGEKVSVTTRLLISHLSGIRHYEKDIKKVKEEKAYKALKMMKENVAFEQEKEGKSNEKNDFTKFKTEQENEAKCRNSKPGKKKNDFEQGELYLREKFENSIESLRLFKNDPLFFKPGSQFLYSTFGYTLLAAIVERASGCKYLDYMQKIFHDLDMLTTVQEENEPVIYNRARFYVYNKKKRLVNTPYVDNSYKWAGGGFLSTVGDLLKFGNAMLYGYQVGLFKNSNENLLPGYLKPETMVMMWTPVPNTEMSWDKEGKYAMAWGVVERKQTYGSCRKQRHYASHTGGAVGASSVLLVLPEELDTETINNKVPPRGIIVSIICNMQSVGLNSTALKIALEFDKDRSD.

A mitochondrion-targeting transit peptide spans 1–115 (MYRLMSAVTA…RAIESSRDLL (115 aa)). The span at 62–83 (GAAPAQSPAAPDPEASPLAEPP) shows a compositional bias: low complexity. Residues 62–96 (GAAPAQSPAAPDPEASPLAEPPQEQSLAPWSPQTP) are disordered. The Acyl-ester intermediate role is filled by serine 164. N6-succinyllysine is present on residues lysine 283 and lysine 284. An N6-acetyllysine mark is found at lysine 297 and lysine 342.

The protein belongs to the peptidase S12 family. Expressed predominantly in skeletal muscle.

It is found in the mitochondrion. Functionally, mitochondrial serine protease that acts as a regulator of mitochondrial lipid metabolism. Acts by decreasing protein levels of PISD, a mitochondrial enzyme that converts phosphatidylserine (PtdSer) to phosphatidylethanolamine (PtdEtn), thereby affecting mitochondrial lipid metabolism. It is unclear whether it acts directly by mediating proteolysis of PISD or by mediating proteolysis of another lipid metabolism protein. Acts as a tumor suppressor that has the ability to inhibit proliferation of multiple types of breast cancer cells: probably by promoting decreased levels of PISD, thereby affecting mitochondrial lipid metabolism. This Homo sapiens (Human) protein is Serine beta-lactamase-like protein LACTB, mitochondrial.